A 519-amino-acid polypeptide reads, in one-letter code: Acetylcholine receptor subunit beta-like 2 (519 aa).

A signal peptide spans 1-18 (MWHWSLLCVFLLVPLANS). Residues 19 to 244 (TAPISFEANP…ITFKLTMRRK (226 aa)) are Extracellular-facing. Asparagine 50 carries an N-linked (GlcNAc...) asparagine glycan. An intrachain disulfide couples cysteine 154 to cysteine 168. A run of 3 helical transmembrane segments spans residues 245–269 (TLFY…VFYL), 277–295 (VTLC…LLLA), and 311–332 (YLLF…VLNI). Over 333-462 (HFRSPSTHNM…WKFVSMVLDR (130 aa)) the chain is Cytoplasmic. The chain crosses the membrane as a helical span at residues 463 to 481 (FFLWLFTLSCVFGTLAIIC).

This sequence belongs to the ligand-gated ion channel (TC 1.A.9) family. Acetylcholine receptor (TC 1.A.9.1) subfamily. In terms of tissue distribution, CNS in embryos.

It is found in the postsynaptic cell membrane. The protein resides in the cell membrane. After binding acetylcholine, the AChR responds by an extensive change in conformation that affects all subunits and leads to opening of an ion-conducting channel across the plasma membrane. This is Acetylcholine receptor subunit beta-like 2 (nAChRbeta2) from Drosophila melanogaster (Fruit fly).